Consider the following 714-residue polypeptide: Forkhead box protein P2 (714 aa).

The span at 1–28 (MMQESATETISNSSMNQNGMSTLSSQLD) shows a compositional bias: polar residues. Disordered stretches follow at residues 1–45 (MMQE…SEVS) and 280–338 (DNGI…TGAS). Residues 291 to 304 (TTNNSSSTTSSTTS) show a composition bias toward low complexity. Over residues 314 to 323 (SIVNGQSSVL) the composition is skewed to polar residues. Positions 325 to 336 (ARRDSSSHEETG) are enriched in basic and acidic residues. A C2H2-type zinc finger spans residues 345 to 370 (GVCKWPGCESICEDFGQFLKHLNNEH). The segment at 387–408 (VQQLEIQLSKERERLQAMMTHL) is leucine-zipper. The segment at 421 to 425 (PLNLV) is CTBP1-binding. Low complexity predominate over residues 437-458 (TSPQSLPQTPTTPTAPVTPITQ). Positions 437–464 (TSPQSLPQTPTTPTAPVTPITQGPSVIT) are disordered. Residues 503 to 593 (RPPFTYATLI…SQKITGSPTL (91 aa)) constitute a DNA-binding region (fork-head). 2 disordered regions span residues 648–667 (LDHIDSNGNSSPGCSPQPHI) and 677–714 (VIAEDEDCPMSLVTTANHSPELEDDREIEEEPLSEDLE). Positions 698–714 (LEDDREIEEEPLSEDLE) are enriched in acidic residues.

Forms homodimers and heterodimers with FOXP1 and FOXP4. Dimerization is required for DNA-binding. Interacts with CTBP1. Interacts with FOXP1. Interacts with TBR1. Interacts with ZMYM2. As to expression, highest expression in lung. Lower expression in spleen, skeletal muscle, brain, kidney and small intestine.

Its subcellular location is the nucleus. Its function is as follows. Transcriptional repressor that may play a role in the specification and differentiation of lung epithelium. May also play a role in developing neural, gastrointestinal and cardiovascular tissues. Can act with CTBP1 to synergistically repress transcription but CTPBP1 is not essential. Plays a role in synapse formation by regulating SRPX2 levels. In Mus musculus (Mouse), this protein is Forkhead box protein P2 (Foxp2).